The chain runs to 551 residues: Cytochrome P450 monooxygenase virE (551 aa).

The first 25 residues, 1-25 (MPKPWVVFGLGTLVLFLWRLNKIGR), serve as a signal peptide directing secretion. Asn392 is a glycosylation site (N-linked (GlcNAc...) asparagine). Heme is bound at residue Cys439.

It belongs to the cytochrome P450 family. Requires heme as cofactor.

Its pathway is secondary metabolite biosynthesis. In terms of biological role, cytochrome P450 monooxygenase; part of the gene cluster that mediates the biosynthesis of virensols and trichoxide, fungal natural products that contain or are derived from a salicylaldehyde core. The pathway begins with the synthesis of the reduced chain in virensol C by the highly reducing polyketide synthase virA via condensation of one acetate and 8 malonate units. VirA has interesting programming rules since the first 2 ketides are fully reduced, the 3 following ketides undergo beta-dehydration, and the last 3 ketides are only reduced to beta-hydroxys to yield the trihydroxy portion. The production of aldehyde virensol C by virA alone is surprising, since virA does not contain a reductase (R) domain that is typically associated with reductive product release in HRPKS. The cupin-domain enzyme virC is involved in enhancing virA product turnover. The short-chain dehydrogenase virB then oxidizes the C-7 alcohol of virensol C to a ketone, yielding virensol D. Virensol D is further transformed to salicylaldehyde 5-deoxyaurocitrin by the short-chain dehydrogenase virD. VirD catalyzes the dehydrogenation of C-3 to form the beta-ketone aldehyde, which is followed by the generation of the nucleophilic C-2 that is required for the intramolecular aldol condensation between C-2 and C-7, itself followed by dehydration and aromatization which leads to salicylaldehyde 5-deoxyaurocitrin. While the dehydrogenation of virensol D is definitely catalyzed by virD, the aldol condensation and dehydration may be uncatalyzed or assisted by virD. The short chain dehydrogenase virG then converts salicylaldehyde 5-deoxyaurocitrin into virensol B which is further hydroxylated by the cytochrome P450 monooxygenase virE to yield the hydroquinone virensol A. VirI then may oxidize virensol A to form the quinone, while virH performs the epoxidation. Finally, the two remaining short-chain dehydrogenases, virK and virL, are probably responsible for reducing the ketones to the corresponding alcohols to furnish the epoxycyclohexanol structure in trichoxide. The sequence is that of Cytochrome P450 monooxygenase virE from Hypocrea virens (strain Gv29-8 / FGSC 10586) (Gliocladium virens).